The primary structure comprises 163 residues: Arginine repressor (163 aa).

This sequence belongs to the ArgR family.

The protein resides in the cytoplasm. It participates in amino-acid biosynthesis; L-arginine biosynthesis [regulation]. Functionally, regulates arginine biosynthesis genes. In Anaeromyxobacter dehalogenans (strain 2CP-C), this protein is Arginine repressor.